The chain runs to 1311 residues: AF4/FMR2 family member 2 (1311 aa).

3 disordered regions span residues 94–187 (LVGI…LTQD), 204–229 (PQIG…GEDA), and 377–417 (TAGH…TKSV). Residues 101-111 (SVPQNPNNKNE) are compositionally biased toward polar residues. Over residues 155 to 164 (SKPEWSRDSH) the composition is skewed to basic and acidic residues. The span at 165–187 (NPSTVLASQASGQPNKMQTLTQD) shows a compositional bias: polar residues. Composition is skewed to polar residues over residues 377–396 (TAGH…SQHL) and 403–417 (QKWN…TKSV). A Phosphoserine modification is found at Ser-430. 4 disordered regions span residues 457 to 530 (KAKP…KWQL), 574 to 726 (TNAS…DQEE), 818 to 867 (SLHA…IPEK), and 881 to 943 (PPCI…DKNI). Positions 465 to 477 (VNPPLATPQPPPA) are enriched in pro residues. Positions 478 to 491 (VQASGGSGSSSESE) are enriched in low complexity. At Thr-517 the chain carries Phosphothreonine. Residues 582–597 (EPKERPLLSLIREKAR) are compositionally biased toward basic and acidic residues. Residues 615–625 (STTSETVSQRT) show a composition bias toward polar residues. Residues 655–668 (PKEKESVELHDPPR) show a composition bias toward basic and acidic residues. A compositionally biased stretch (basic residues) spans 669–679 (GRNKATAHKPA). Over residues 857-867 (PIEVAEKIPEK) the composition is skewed to basic and acidic residues. 2 stretches are compositionally biased toward pro residues: residues 883–892 (CISPAPPHKP) and 913–922 (FPPPLSPLPE).

The protein belongs to the AF4 family. As to expression, brain (most abundant in hippocampus and amygdala), placenta and lung.

The protein resides in the nucleus speckle. RNA-binding protein. Might be involved in alternative splicing regulation through an interaction with G-quartet RNA structure. This chain is AF4/FMR2 family member 2, found in Homo sapiens (Human).